The following is a 3503-amino-acid chain: Protein dachsous (3503 aa).

Residues 1–20 (MLRSSLLILLAIVLLGSSQA) form the signal peptide. The Extracellular portion of the chain corresponds to 21–3045 (ASHDQERERK…SSSGSIGDWA (3025 aa)). Cadherin domains are found at residues 22–121 (SHDQ…APTF), 122–233 (PQTS…QPIF), 234–340 (NQSR…QPTI), 345–451 (LSDD…PPEF), 452–558 (EQDL…EPIF), 559–662 (DQSF…RPVF), 663–774 (YPRE…PPIF), 775–878 (EKAR…APEF), 879–983 (EASM…PPVF), 984–1100 (EKDE…DPKF), 1101–1203 (QKSK…APEI), 1205–1312 (DPQE…RPTF), 1313–1432 (TSSS…APEW), and 1433–1549 (PQDP…APHF). N-linked (GlcNAc...) asparagine glycans are attached at residues N220 and N234. S236 is modified (phosphoserine). 3 N-linked (GlcNAc...) asparagine glycosylation sites follow: N245, N381, and N416. N-linked (GlcNAc...) asparagine glycosylation is found at N564, N594, and N743. N-linked (GlcNAc...) asparagine glycans are attached at residues N966, N991, N1006, N1029, N1143, and N1236. 4 N-linked (GlcNAc...) asparagine glycosylation sites follow: N1453, N1479, N1524, and N1553. Cadherin domains follow at residues 1556–1666 (GGKT…PPRF), 1667–1794 (LQAV…SPEF), 1796–1899 (PGSC…APRF), 1900–2004 (KLSK…RPIF), 2005–2111 (ERYP…TPVL), 2114–2269 (QNET…SPKF), 2270–2375 (SQKQ…QPTF), 2375–2479 (FPPN…APVF), 2489–2595 (AILP…RSQF), 2596–2699 (LQNQ…FPIF), 2701–2809 (RSAK…EPKF), 2810–2916 (PLTE…TPQF), and 2919–3028 (RTYR…HPGT). 3 N-linked (GlcNAc...) asparagine glycosylation sites follow: N1700, N1884, and N1940. The N-linked (GlcNAc...) asparagine glycan is linked to N2115. Residues 2193–2225 (GRALHYEEEIDESSEEDPNNSTRSQRALTSSSF) are disordered. Over residues 2200–2210 (EEIDESSEEDP) the composition is skewed to acidic residues. N-linked (GlcNAc...) asparagine glycosylation is found at N2211 and N2212. The span at 2211 to 2225 (NNSTRSQRALTSSSF) shows a compositional bias: polar residues. Residues N2421, N2511, N2520, N2547, N2588, and N2678 are each glycosylated (N-linked (GlcNAc...) asparagine). Residues N2845 and N2967 are each glycosylated (N-linked (GlcNAc...) asparagine). Residues 3046 to 3066 (IGLLVAFLLVLCAAAGIFLFI) form a helical membrane-spanning segment. The Cytoplasmic segment spans residues 3067 to 3503 (HMRSRKPRNA…SQRGNVGTRM (437 aa)). 3 disordered regions span residues 3114–3195 (AGAA…GRIS), 3360–3404 (LSEH…IPPP), and 3431–3503 (LPRS…GTRM). 2 stretches are compositionally biased toward low complexity: residues 3133-3159 (GAHAGSSGAATTSELSGSEQSGSSGRG) and 3363-3372 (HSGSGASSSA). Residues 3391 to 3404 (KPPPSAPPTHIPPP) are compositionally biased toward pro residues. Residues 3440–3463 (ASGSFSTSSAMSPSFSPSLSPLAT) show a composition bias toward low complexity. A phosphoserine mark is found at S3465 and S3469. A compositionally biased stretch (polar residues) spans 3492–3503 (QPSQRGNVGTRM).

As to quaternary structure, interacts (via cytoplasmic region) with Myo31DF. Phosphorylated by fj on Ser/Thr of cadherin domains. Expressed in embryonic ectoderm. In larvae, expression is restricted to imaginal disks and brain.

The protein resides in the cell membrane. It localises to the cell junction. Required for normal morphogenesis of adult structures derived from imaginal disks. Plays a role in planar cell polarity and in determining body left-right asymmetry. Expression in segment H1 of the imaginal ring and interaction with Myo31DF are required to induce changes of cell shape and orientation in segment H2, which then gives rise to normal, dextral looping of the adult hindgut. The protein is Protein dachsous (ds) of Drosophila melanogaster (Fruit fly).